The following is a 313-amino-acid chain: Protein FixB (313 aa).

Residue 255-283 participates in FAD binding; sequence LYLAVGISGQIQHMVGANASQTIFAINKD.

This sequence belongs to the ETF alpha-subunit/FixB family. As to quaternary structure, heterodimer of FixA and FixB.

Its pathway is amine and polyamine metabolism; carnitine metabolism. Required for anaerobic carnitine reduction. May bring reductant to CaiA. The polypeptide is Protein FixB (Escherichia coli (strain SMS-3-5 / SECEC)).